Consider the following 73-residue polypeptide: Small ribosomal subunit protein bS18 (73 aa).

Belongs to the bacterial ribosomal protein bS18 family. Part of the 30S ribosomal subunit. Forms a tight heterodimer with protein bS6.

In terms of biological role, binds as a heterodimer with protein bS6 to the central domain of the 16S rRNA, where it helps stabilize the platform of the 30S subunit. In Synechococcus sp. (strain WH7803), this protein is Small ribosomal subunit protein bS18.